Consider the following 424-residue polypeptide: Trigger factor (424 aa).

The PPIase FKBP-type domain occupies 163-248 (GDTVVLDFEG…IHEIKAKELP (86 aa)).

The protein belongs to the FKBP-type PPIase family. Tig subfamily.

Its subcellular location is the cytoplasm. The catalysed reaction is [protein]-peptidylproline (omega=180) = [protein]-peptidylproline (omega=0). In terms of biological role, involved in protein export. Acts as a chaperone by maintaining the newly synthesized protein in an open conformation. Functions as a peptidyl-prolyl cis-trans isomerase. The protein is Trigger factor of Bacillus pumilus (strain SAFR-032).